Reading from the N-terminus, the 129-residue chain is Small ribosomal subunit protein uS12 (129 aa).

D89 is subject to 3-methylthioaspartic acid.

Belongs to the universal ribosomal protein uS12 family. In terms of assembly, part of the 30S ribosomal subunit. Contacts proteins S8 and S17. May interact with IF1 in the 30S initiation complex.

Its function is as follows. With S4 and S5 plays an important role in translational accuracy. Functionally, interacts with and stabilizes bases of the 16S rRNA that are involved in tRNA selection in the A site and with the mRNA backbone. Located at the interface of the 30S and 50S subunits, it traverses the body of the 30S subunit contacting proteins on the other side and probably holding the rRNA structure together. The combined cluster of proteins S8, S12 and S17 appears to hold together the shoulder and platform of the 30S subunit. This is Small ribosomal subunit protein uS12 from Helicobacter hepaticus (strain ATCC 51449 / 3B1).